Reading from the N-terminus, the 592-residue chain is UPF0329 protein ECU01_0110/ECU01_1500/ECU08_0040 (592 aa).

2 stretches are compositionally biased toward basic and acidic residues: residues 306-339 (RQRR…SKEK) and 353-362 (EAKEEEKKES). Residues 306-404 (RQRRREREIE…RKRYKIHRRV (99 aa)) are disordered.

It belongs to the UPF0329 family.

In Encephalitozoon cuniculi (strain GB-M1) (Microsporidian parasite), this protein is UPF0329 protein ECU01_0110/ECU01_1500/ECU08_0040.